The chain runs to 681 residues: Phenylalanine--tRNA ligase beta subunit (681 aa).

The B5 domain occupies 288–363 (PARETVLLRP…RIHGYDQIPE (76 aa)). Aspartate 341, aspartate 347, glutamate 350, and glutamate 351 together coordinate Mg(2+). Positions 586 to 681 (SSFPSIQRDL…EKQLEAVLLR (96 aa)) constitute an FDX-ACB domain.

This sequence belongs to the phenylalanyl-tRNA synthetase beta subunit family. Type 1 subfamily. In terms of assembly, tetramer of two alpha and two beta subunits. The cofactor is Mg(2+).

The protein resides in the cytoplasm. The catalysed reaction is tRNA(Phe) + L-phenylalanine + ATP = L-phenylalanyl-tRNA(Phe) + AMP + diphosphate + H(+). This Rhodopirellula baltica (strain DSM 10527 / NCIMB 13988 / SH1) protein is Phenylalanine--tRNA ligase beta subunit.